A 329-amino-acid polypeptide reads, in one-letter code: Cytosolic arginine sensor for mTORC1 subunit 2 (329 aa).

ACT domains lie at 72–140 (ADAT…HTLS) and 262–322 (ELWK…SALK).

Belongs to the GATS family. Forms homodimers and heterodimers with CASTOR1. Interacts with the GATOR2 complex which is composed of MIOS, SEC13, SEH1L, WDR24 and WDR59; the interaction is not regulated by arginine. Widely expressed.

The protein resides in the cytoplasm. Its subcellular location is the cytosol. Functions as a negative regulator of the TORC1 signaling pathway through the GATOR complex. As part of homodimers or heterodimers with CASTOR1, directly binds and inhibits the GATOR subcomplex GATOR2 and thereby mTORC1. Does not directly bind arginine, but binding of arginine to CASTOR1 disrupts the interaction of CASTOR2-containing heterodimers with GATOR2 which can in turn activate mTORC1 and the TORC1 signaling pathway. This is Cytosolic arginine sensor for mTORC1 subunit 2 from Homo sapiens (Human).